The chain runs to 371 residues: DNA replication and repair protein RecF (371 aa).

Residue 30–37 (GQNGMGKT) participates in ATP binding.

The protein belongs to the RecF family.

Its subcellular location is the cytoplasm. Functionally, the RecF protein is involved in DNA metabolism; it is required for DNA replication and normal SOS inducibility. RecF binds preferentially to single-stranded, linear DNA. It also seems to bind ATP. The protein is DNA replication and repair protein RecF of Phocaeicola vulgatus (strain ATCC 8482 / DSM 1447 / JCM 5826 / CCUG 4940 / NBRC 14291 / NCTC 11154) (Bacteroides vulgatus).